The sequence spans 472 residues: PEP-dependent dihydroxyacetone kinase, phosphoryl donor subunit DhaM (472 aa).

A PTS EIIA type-4 domain is found at 1-135 (MVNLVIVSHS…NALEAKRVQL (135 aa)). His9 acts as the Tele-phosphohistidine intermediate in catalysis. Residues 156–243 (ARSVSVVIQN…ALAAENFGEP (88 aa)) enclose the HPr domain. His170 (pros-phosphohistidine intermediate) is an active-site residue. The tract at residues 266 to 472 (PQPQDRISRE…DIPGKRVIRG (207 aa)) is PTS EI-like, N-terminal part. His432 functions as the Tele-phosphohistidine intermediate in the catalytic mechanism.

It belongs to the PEP-utilizing enzyme family. As to quaternary structure, homodimer. The dihydroxyacetone kinase complex is composed of a homodimer of DhaM, a homodimer of DhaK and the subunit DhaL.

It catalyses the reaction dihydroxyacetone + phosphoenolpyruvate = dihydroxyacetone phosphate + pyruvate. Its function is as follows. Component of the dihydroxyacetone kinase complex, which is responsible for the phosphoenolpyruvate (PEP)-dependent phosphorylation of dihydroxyacetone. DhaM serves as the phosphoryl donor. Is phosphorylated by phosphoenolpyruvate in an EI- and HPr-dependent reaction, and a phosphorelay system on histidine residues finally leads to phosphoryl transfer to DhaL and dihydroxyacetone. This Klebsiella michiganensis (strain ATCC 8724 / DSM 4798 / JCM 20051 / NBRC 3318 / NRRL B-199 / KCTC 1686 / BUCSAV 143 / CCM 1901) protein is PEP-dependent dihydroxyacetone kinase, phosphoryl donor subunit DhaM.